Reading from the N-terminus, the 510-residue chain is Inositol-3-phosphate synthase (510 aa).

NAD(+)-binding residues include Gly70, Gly71, Asn72, Asn73, Asp143, Ile180, Gln190, Arg193, Thr230, Ala231, Asn232, Thr233, Gly281, Ser282, Asp306, Ser309, Asn340, Asn341, Asp342, Lys355, Gly393, Asp394, Asp422, and Ser423.

It belongs to the myo-inositol 1-phosphate synthase family. It depends on NAD(+) as a cofactor.

It localises to the cytoplasm. It is found in the cytosol. The protein localises to the nucleus. It catalyses the reaction D-glucose 6-phosphate = 1D-myo-inositol 3-phosphate. It functions in the pathway polyol metabolism; myo-inositol biosynthesis; myo-inositol from D-glucose 6-phosphate: step 1/2. Key enzyme in myo-inositol biosynthesis pathway that catalyzes the conversion of glucose 6-phosphate to 1-myo-inositol 1-phosphate in a NAD-dependent manner. In Sesamum indicum (Oriental sesame), this protein is Inositol-3-phosphate synthase.